We begin with the raw amino-acid sequence, 269 residues long: MPELPEVEVSRMGISPHLVGETIKTLTFRTPKLRWDIPQELKRLEGQVIRSISRRAKYLLIETDTGTAIVHLGMSGSLRVLDADFPPAKHDHVDLKLTNGKILRYNDPRRFGAWLWSAPDEIHTVLLGSGPEPLTDDFNADYIAEKAEKRKVAVKQFIMDNKVVVGVGNIYANEALFSSRINPLRSASKVTKQEWLLLTKEIKQVLATAIRQGGTTLKDFAQADGKPGYFAQELQVYGKAGEQCPNCAELIQELKIGQRNTFYCSSCQV.

Proline 2 acts as the Schiff-base intermediate with DNA in catalysis. Residue glutamate 3 is the Proton donor of the active site. The active-site Proton donor; for beta-elimination activity is lysine 57. 3 residues coordinate DNA: histidine 90, arginine 109, and arginine 150. The segment at 235–269 (QVYGKAGEQCPNCAELIQELKIGQRNTFYCSSCQV) adopts an FPG-type zinc-finger fold. Residue arginine 259 is the Proton donor; for delta-elimination activity of the active site.

This sequence belongs to the FPG family. As to quaternary structure, monomer. Requires Zn(2+) as cofactor.

The enzyme catalyses Hydrolysis of DNA containing ring-opened 7-methylguanine residues, releasing 2,6-diamino-4-hydroxy-5-(N-methyl)formamidopyrimidine.. It catalyses the reaction 2'-deoxyribonucleotide-(2'-deoxyribose 5'-phosphate)-2'-deoxyribonucleotide-DNA = a 3'-end 2'-deoxyribonucleotide-(2,3-dehydro-2,3-deoxyribose 5'-phosphate)-DNA + a 5'-end 5'-phospho-2'-deoxyribonucleoside-DNA + H(+). Involved in base excision repair of DNA damaged by oxidation or by mutagenic agents. Acts as a DNA glycosylase that recognizes and removes damaged bases. Has a preference for oxidized purines, such as 7,8-dihydro-8-oxoguanine (8-oxoG). Has AP (apurinic/apyrimidinic) lyase activity and introduces nicks in the DNA strand. Cleaves the DNA backbone by beta-delta elimination to generate a single-strand break at the site of the removed base with both 3'- and 5'-phosphates. This Vibrio atlanticus (strain LGP32) (Vibrio splendidus (strain Mel32)) protein is Formamidopyrimidine-DNA glycosylase.